The primary structure comprises 786 residues: UPF0313 protein SO_0311 (786 aa).

Positions 371 to 649 (AYDMIKTSIN…KALLRYHDPA (279 aa)) constitute a Radical SAM core domain. [4Fe-4S] cluster-binding residues include Cys385, Cys389, and Cys392. 2 disordered regions span residues 669–688 (NSPN…PKWM) and 698–786 (LTRF…QQAK). Composition is skewed to basic and acidic residues over residues 679–688 (GRNERGPKWM) and 706–717 (FDERKGKGDAKG). Residues 718 to 731 (KPSASKPKGPKSGA) show a composition bias toward low complexity. Polar residues predominate over residues 732-741 (NAPQSQQPKT).

Belongs to the UPF0313 family. The cofactor is [4Fe-4S] cluster.

The polypeptide is UPF0313 protein SO_0311 (Shewanella oneidensis (strain ATCC 700550 / JCM 31522 / CIP 106686 / LMG 19005 / NCIMB 14063 / MR-1)).